The chain runs to 57 residues: Large ribosomal subunit protein uL30 (57 aa).

This sequence belongs to the universal ribosomal protein uL30 family. As to quaternary structure, part of the 50S ribosomal subunit.

In Buchnera aphidicola subsp. Cinara cedri (strain Cc), this protein is Large ribosomal subunit protein uL30.